The following is a 400-amino-acid chain: Enoyl-[acyl-carrier-protein] reductase [NADH] (400 aa).

NAD(+)-binding positions include 48–53 (GASTGY), 74–75 (FE), 111–112 (DA), and 139–140 (LA). Y225 provides a ligand contact to substrate. Y235 serves as the catalytic Proton donor. NAD(+) is bound by residues K244 and 273-275 (VVT).

The protein belongs to the TER reductase family. Monomer.

The enzyme catalyses a 2,3-saturated acyl-[ACP] + NAD(+) = a (2E)-enoyl-[ACP] + NADH + H(+). The protein operates within lipid metabolism; fatty acid biosynthesis. Involved in the final reduction of the elongation cycle of fatty acid synthesis (FAS II). Catalyzes the reduction of a carbon-carbon double bond in an enoyl moiety that is covalently linked to an acyl carrier protein (ACP). This is Enoyl-[acyl-carrier-protein] reductase [NADH] from Burkholderia vietnamiensis (strain G4 / LMG 22486) (Burkholderia cepacia (strain R1808)).